The chain runs to 41 residues: Perlinhibin (41 aa).

Contains four disulfide bonds.

Functionally, binds to calcite crystals in the shell and inhibits further shell growth at the binding site. In Haliotis laevigata (Smooth Australian abalone), this protein is Perlinhibin.